Reading from the N-terminus, the 517-residue chain is 2-isopropylmalate synthase (517 aa).

The Pyruvate carboxyltransferase domain occupies 5–268; sequence IIIFDTTLRD…DTRINTQEIH (264 aa). Mn(2+) is bound by residues D14, H202, H204, and N238. Residues 393 to 517 form a regulatory domain region; it reads SLDVITSQTI…ADLKSHKISQ (125 aa).

Belongs to the alpha-IPM synthase/homocitrate synthase family. LeuA type 1 subfamily. As to quaternary structure, homodimer. The cofactor is Mn(2+).

The protein localises to the cytoplasm. It catalyses the reaction 3-methyl-2-oxobutanoate + acetyl-CoA + H2O = (2S)-2-isopropylmalate + CoA + H(+). It participates in amino-acid biosynthesis; L-leucine biosynthesis; L-leucine from 3-methyl-2-oxobutanoate: step 1/4. Its function is as follows. Catalyzes the condensation of the acetyl group of acetyl-CoA with 3-methyl-2-oxobutanoate (2-ketoisovalerate) to form 3-carboxy-3-hydroxy-4-methylpentanoate (2-isopropylmalate). In Histophilus somni (strain 2336) (Haemophilus somnus), this protein is 2-isopropylmalate synthase.